The primary structure comprises 161 residues: 2-C-methyl-D-erythritol 2,4-cyclodiphosphate synthase (161 aa).

Positions 11 and 13 each coordinate a divalent metal cation. Residues 11-13 (DIH) and 37-38 (HS) contribute to the 4-CDP-2-C-methyl-D-erythritol 2-phosphate site. Histidine 45 contributes to the a divalent metal cation binding site. 4-CDP-2-C-methyl-D-erythritol 2-phosphate-binding positions include 59-61 (DIG), 135-138 (TTNE), and arginine 145.

This sequence belongs to the IspF family. As to quaternary structure, homotrimer. It depends on a divalent metal cation as a cofactor.

It carries out the reaction 4-CDP-2-C-methyl-D-erythritol 2-phosphate = 2-C-methyl-D-erythritol 2,4-cyclic diphosphate + CMP. Its pathway is isoprenoid biosynthesis; isopentenyl diphosphate biosynthesis via DXP pathway; isopentenyl diphosphate from 1-deoxy-D-xylulose 5-phosphate: step 4/6. Its function is as follows. Involved in the biosynthesis of isopentenyl diphosphate (IPP) and dimethylallyl diphosphate (DMAPP), two major building blocks of isoprenoid compounds. Catalyzes the conversion of 4-diphosphocytidyl-2-C-methyl-D-erythritol 2-phosphate (CDP-ME2P) to 2-C-methyl-D-erythritol 2,4-cyclodiphosphate (ME-CPP) with a corresponding release of cytidine 5-monophosphate (CMP). This chain is 2-C-methyl-D-erythritol 2,4-cyclodiphosphate synthase, found in Cyanothece sp. (strain PCC 7425 / ATCC 29141).